Here is a 264-residue protein sequence, read N- to C-terminus: Thymidylate synthase (264 aa).

Arginine 21 provides a ligand contact to dUMP. Histidine 51 is a binding site for (6R)-5,10-methylene-5,6,7,8-tetrahydrofolate. Residue 126–127 (RR) coordinates dUMP. The Nucleophile role is filled by cysteine 146. DUMP contacts are provided by residues 166 to 169 (RSCD), asparagine 177, and 207 to 209 (HLY). (6R)-5,10-methylene-5,6,7,8-tetrahydrofolate is bound at residue aspartate 169. (6R)-5,10-methylene-5,6,7,8-tetrahydrofolate is bound at residue alanine 263.

It belongs to the thymidylate synthase family. Bacterial-type ThyA subfamily. As to quaternary structure, homodimer.

Its subcellular location is the cytoplasm. It carries out the reaction dUMP + (6R)-5,10-methylene-5,6,7,8-tetrahydrofolate = 7,8-dihydrofolate + dTMP. The protein operates within pyrimidine metabolism; dTTP biosynthesis. Functionally, catalyzes the reductive methylation of 2'-deoxyuridine-5'-monophosphate (dUMP) to 2'-deoxythymidine-5'-monophosphate (dTMP) while utilizing 5,10-methylenetetrahydrofolate (mTHF) as the methyl donor and reductant in the reaction, yielding dihydrofolate (DHF) as a by-product. This enzymatic reaction provides an intracellular de novo source of dTMP, an essential precursor for DNA biosynthesis. The protein is Thymidylate synthase of Sodalis glossinidius (strain morsitans).